Reading from the N-terminus, the 54-residue chain is Large ribosomal subunit protein bL33 (54 aa).

The protein belongs to the bacterial ribosomal protein bL33 family.

The chain is Large ribosomal subunit protein bL33 from Symbiobacterium thermophilum (strain DSM 24528 / JCM 14929 / IAM 14863 / T).